A 253-amino-acid chain; its full sequence is Amino-acid-binding protein AabA (253 aa).

The first 23 residues, 1-23 (MPFLKTLFRGALCSIACGASLFC), serve as a signal peptide directing secretion.

Belongs to the bacterial solute-binding protein 3 family.

It localises to the periplasm. This is Amino-acid-binding protein AabA (aabA) from Dichelobacter nodosus (Bacteroides nodosus).